Here is a 368-residue protein sequence, read N- to C-terminus: Cytochrome b (368 aa).

The next 4 membrane-spanning stretches (helical) occupy residues 33 to 53 (FGSL…FLAM), 77 to 99 (WLIR…THTG), 112 to 132 (TWMV…LGYV), and 178 to 198 (FYAL…MHII). Positions 83 and 97 each coordinate heme b. Heme b is bound by residues H182 and H196. H201 lines the a ubiquinone pocket. The next 4 helical transmembrane spans lie at 224–244 (FSAK…SVVL), 288–308 (LGGV…PMMN), 323–343 (IAFW…SKPV), and 345–365 (SPFE…YMIM).

The protein belongs to the cytochrome b family. As to quaternary structure, the main subunits of complex b-c1 are: cytochrome b, cytochrome c1 and the Rieske protein. The cofactor is heme b.

It localises to the mitochondrion inner membrane. Component of the ubiquinol-cytochrome c reductase complex (complex III or cytochrome b-c1 complex) that is part of the mitochondrial respiratory chain. The b-c1 complex mediates electron transfer from ubiquinol to cytochrome c. Contributes to the generation of a proton gradient across the mitochondrial membrane that is then used for ATP synthesis. The sequence is that of Cytochrome b (mt:Cyt-b) from Bugula neritina (Brown bryozoan).